Here is a 503-residue protein sequence, read N- to C-terminus: Probable cytosol aminopeptidase (503 aa).

Residues Lys270 and Asp275 each coordinate Mn(2+). Lys282 is a catalytic residue. The Mn(2+) site is built by Asp293, Asp352, and Glu354. The active site involves Arg356.

This sequence belongs to the peptidase M17 family. Mn(2+) serves as cofactor.

It is found in the cytoplasm. The enzyme catalyses Release of an N-terminal amino acid, Xaa-|-Yaa-, in which Xaa is preferably Leu, but may be other amino acids including Pro although not Arg or Lys, and Yaa may be Pro. Amino acid amides and methyl esters are also readily hydrolyzed, but rates on arylamides are exceedingly low.. It carries out the reaction Release of an N-terminal amino acid, preferentially leucine, but not glutamic or aspartic acids.. In terms of biological role, presumably involved in the processing and regular turnover of intracellular proteins. Catalyzes the removal of unsubstituted N-terminal amino acids from various peptides. In Yersinia pseudotuberculosis serotype O:1b (strain IP 31758), this protein is Probable cytosol aminopeptidase.